A 181-amino-acid chain; its full sequence is 3-hydroxyanthranilate 3,4-dioxygenase (181 aa).

R46 provides a ligand contact to O2. 3 residues coordinate Fe cation: H50, E56, and H95. E56 is a substrate binding site. Substrate is bound by residues R99 and E109.

Belongs to the 3-HAO family. It depends on Fe(2+) as a cofactor.

The protein localises to the cytoplasm. The enzyme catalyses 3-hydroxyanthranilate + O2 = (2Z,4Z)-2-amino-3-carboxymuconate 6-semialdehyde. It participates in cofactor biosynthesis; NAD(+) biosynthesis; quinolinate from L-kynurenine: step 3/3. Functionally, catalyzes the oxidative ring opening of 3-hydroxyanthranilate to 2-amino-3-carboxymuconate semialdehyde, which spontaneously cyclizes to quinolinate. The sequence is that of 3-hydroxyanthranilate 3,4-dioxygenase from Mycosarcoma maydis (Corn smut fungus).